A 388-amino-acid chain; its full sequence is Succinate--CoA ligase [ADP-forming] subunit beta (388 aa).

In terms of domain architecture, ATP-grasp spans 9–244 (KSLFAEYGLP…PSQDDAREAH (236 aa)). Residues Lys46, 53–55 (GRG), Glu99, Thr102, and Glu107 each bind ATP. Residues Asn199 and Asp213 each contribute to the Mg(2+) site. Substrate is bound by residues Asn264 and 321-323 (GIV).

Belongs to the succinate/malate CoA ligase beta subunit family. In terms of assembly, heterotetramer of two alpha and two beta subunits. Mg(2+) is required as a cofactor.

The enzyme catalyses succinate + ATP + CoA = succinyl-CoA + ADP + phosphate. It carries out the reaction GTP + succinate + CoA = succinyl-CoA + GDP + phosphate. It functions in the pathway carbohydrate metabolism; tricarboxylic acid cycle; succinate from succinyl-CoA (ligase route): step 1/1. Functionally, succinyl-CoA synthetase functions in the citric acid cycle (TCA), coupling the hydrolysis of succinyl-CoA to the synthesis of either ATP or GTP and thus represents the only step of substrate-level phosphorylation in the TCA. The beta subunit provides nucleotide specificity of the enzyme and binds the substrate succinate, while the binding sites for coenzyme A and phosphate are found in the alpha subunit. This Shewanella baltica (strain OS195) protein is Succinate--CoA ligase [ADP-forming] subunit beta.